The chain runs to 151 residues: NADH dehydrogenase [ubiquinone] 1 beta subcomplex subunit 11, mitochondrial (151 aa).

The transit peptide at Met1–Trp29 directs the protein to the mitochondrion. The disordered stretch occupies residues Ser39–Glu62. A helical transmembrane segment spans residues Val87–Leu107.

Belongs to the complex I NDUFB11 subunit family. In terms of assembly, complex I is composed of 45 different subunits. Interacts with BCAP31.

It localises to the mitochondrion inner membrane. Its function is as follows. Accessory subunit of the mitochondrial membrane respiratory chain NADH dehydrogenase (Complex I), that is believed not to be involved in catalysis. Complex I functions in the transfer of electrons from NADH to the respiratory chain. The immediate electron acceptor for the enzyme is believed to be ubiquinone. This is NADH dehydrogenase [ubiquinone] 1 beta subcomplex subunit 11, mitochondrial (NDUFB11) from Cricetulus griseus (Chinese hamster).